A 244-amino-acid chain; its full sequence is Kallikrein-6 (244 aa).

An N-terminal signal peptide occupies residues methionine 1–alanine 16. Residues glutamate 17–lysine 21 constitute a propeptide, activation peptide. The Peptidase S1 domain occupies leucine 22 to glutamine 242. Cystine bridges form between cysteine 28–cysteine 157, cysteine 47–cysteine 63, cysteine 131–cysteine 231, cysteine 138–cysteine 203, cysteine 168–cysteine 182, and cysteine 193–cysteine 218. Residues histidine 62 and aspartate 106 each act as charge relay system in the active site. A glycan (N-linked (GlcNAc...) asparagine) is linked at asparagine 134. The active-site Charge relay system is serine 197.

Inactivated by autolytic cleavage after Arg-80. In terms of tissue distribution, in fluids, highest levels found in milk of lactating women followed by cerebrospinal fluid, nipple aspirate fluid and breast cyst fluid. Also found in serum, seminal plasma and some amniotic fluids and breast tumor cytosolic extracts. Not detected in urine. At the tissue level, highest concentrations found in glandular tissues such as salivary glands followed by lung, colon, fallopian tube, placenta, breast, pituitary and kidney. Not detected in skin, spleen, bone, thyroid, heart, ureter, liver, muscle, endometrium, testis, pancreas, seminal vesicle, ovary, adrenals and prostate. In brain, detected in gray matter neurons (at protein level). Colocalizes with pathological inclusions such as Lewy bodies and glial cytoplasmic inclusions. Overexpressed in primary breast tumors but not expressed in metastatic tumors.

Its subcellular location is the secreted. The protein localises to the nucleus. The protein resides in the nucleolus. It is found in the cytoplasm. It localises to the mitochondrion. Its subcellular location is the microsome. With respect to regulation, inhibited by a range of serine protease inhibitors including soybean trypsin inhibitor, benzamidine and serpins. Activated by a range of glycosaminoglycans including chondroitin sulfate, dermatan sulfate, heparan sulfate and heparin. Its function is as follows. Serine protease which exhibits a preference for Arg over Lys in the substrate P1 position and for Ser or Pro in the P2 position. Shows activity against amyloid precursor protein, myelin basic protein, gelatin, casein and extracellular matrix proteins such as fibronectin, laminin, vitronectin and collagen. Degrades alpha-synuclein and prevents its polymerization, indicating that it may be involved in the pathogenesis of Parkinson disease and other synucleinopathies. May be involved in regulation of axon outgrowth following spinal cord injury. Tumor cells treated with a neutralizing KLK6 antibody migrate less than control cells, suggesting a role in invasion and metastasis. This Homo sapiens (Human) protein is Kallikrein-6 (KLK6).